Here is a 156-residue protein sequence, read N- to C-terminus: Arginine repressor (156 aa).

The protein belongs to the ArgR family.

The protein localises to the cytoplasm. It functions in the pathway amino-acid biosynthesis; L-arginine biosynthesis [regulation]. Regulates arginine biosynthesis genes. This chain is Arginine repressor, found in Shewanella halifaxensis (strain HAW-EB4).